The chain runs to 750 residues: Polyribonucleotide nucleotidyltransferase (750 aa).

2 residues coordinate Mg(2+): D489 and D495. The region spanning 556 to 620 (PKMITRRIPN…EGIDKVIAKI (65 aa)) is the KH domain. The region spanning 630 to 701 (GSVYEVKVIK…KTRKDKVSRK (72 aa)) is the S1 motif domain. The disordered stretch occupies residues 697-750 (KVSRKALMEKPEGYKERAPRDRDDKRGSRDNNRGRDNRGRDNRRDDRKPRENKD). A compositionally biased stretch (basic and acidic residues) spans 702–750 (ALMEKPEGYKERAPRDRDDKRGSRDNNRGRDNRGRDNRRDDRKPRENKD).

This sequence belongs to the polyribonucleotide nucleotidyltransferase family. It depends on Mg(2+) as a cofactor.

The protein resides in the cytoplasm. It carries out the reaction RNA(n+1) + phosphate = RNA(n) + a ribonucleoside 5'-diphosphate. Its function is as follows. Involved in mRNA degradation. Catalyzes the phosphorolysis of single-stranded polyribonucleotides processively in the 3'- to 5'-direction. This chain is Polyribonucleotide nucleotidyltransferase, found in Christiangramia forsetii (strain DSM 17595 / CGMCC 1.15422 / KT0803) (Gramella forsetii).